Consider the following 420-residue polypeptide: Probable protein phosphatase 2C 73 (420 aa).

A PPM-type phosphatase domain is found at 33–336; sequence GVSMHTKQGW…DDCAVVCLFL (304 aa). Residues Asp69 and Gly70 each contribute to the Mn(2+) site. Residues 96-105 are compositionally biased toward polar residues; that stretch reads LKTEQDPSSN. The interval 96-119 is disordered; sequence LKTEQDPSSNTDKETLEKSDCTSL. The segment covering 106 to 115 has biased composition (basic and acidic residues); the sequence is TDKETLEKSD. The Mn(2+) site is built by Asp281 and Asp327.

The protein belongs to the PP2C family. The cofactor is Mg(2+). Requires Mn(2+) as cofactor.

It carries out the reaction O-phospho-L-seryl-[protein] + H2O = L-seryl-[protein] + phosphate. The catalysed reaction is O-phospho-L-threonyl-[protein] + H2O = L-threonyl-[protein] + phosphate. The polypeptide is Probable protein phosphatase 2C 73 (Oryza sativa subsp. japonica (Rice)).